Here is a 403-residue protein sequence, read N- to C-terminus: tRNA pseudouridine synthase 4 (403 aa).

The active-site Nucleophile is the D75.

This sequence belongs to the pseudouridine synthase TruB family.

It is found in the nucleus. Its subcellular location is the mitochondrion. The catalysed reaction is uridine(55) in tRNA = pseudouridine(55) in tRNA. It carries out the reaction a uridine in mRNA = a pseudouridine in mRNA. Its function is as follows. Responsible for synthesis of pseudouridine from uracil-55 in the psi GC loop of transfer RNAs. Also catalyzes pseudouridylation of mRNAs with the consensus sequence 5'-GGUUCRA-3'. The polypeptide is tRNA pseudouridine synthase 4 (PUS4) (Saccharomyces cerevisiae (strain ATCC 204508 / S288c) (Baker's yeast)).